The sequence spans 377 residues: tRNA(Met) cytidine acetate ligase (377 aa).

Residues 7-20 (VTEY…HLYH), G100, N153, and R178 contribute to the ATP site.

It belongs to the TmcAL family.

It localises to the cytoplasm. The enzyme catalyses cytidine(34) in elongator tRNA(Met) + acetate + ATP = N(4)-acetylcytidine(34) in elongator tRNA(Met) + AMP + diphosphate. Its function is as follows. Catalyzes the formation of N(4)-acetylcytidine (ac(4)C) at the wobble position of elongator tRNA(Met), using acetate and ATP as substrates. First activates an acetate ion to form acetyladenylate (Ac-AMP) and then transfers the acetyl group to tRNA to form ac(4)C34. The protein is tRNA(Met) cytidine acetate ligase of Staphylococcus saprophyticus subsp. saprophyticus (strain ATCC 15305 / DSM 20229 / NCIMB 8711 / NCTC 7292 / S-41).